Here is a 194-residue protein sequence, read N- to C-terminus: Sigma factor AlgU negative regulatory protein (194 aa).

A helical transmembrane segment spans residues 89-105; sequence LAVAASVTLAVLAGVRL.

This sequence belongs to the RseA family.

It localises to the cell membrane. In terms of biological role, negative regulator of the sigma factor AlgU. Plays a role in the differentiation of P.aeruginosa into the alginate-producing form. Inactivation of mucA causes a switch from the non-mucoid to mucoid state resulting in constitutive expression of alginate biosynthetic genes. This chain is Sigma factor AlgU negative regulatory protein (mucA), found in Pseudomonas aeruginosa (strain ATCC 15692 / DSM 22644 / CIP 104116 / JCM 14847 / LMG 12228 / 1C / PRS 101 / PAO1).